The following is a 113-amino-acid chain: Large ribosomal subunit protein uL22 (113 aa).

The protein belongs to the universal ribosomal protein uL22 family. Part of the 50S ribosomal subunit.

Functionally, this protein binds specifically to 23S rRNA; its binding is stimulated by other ribosomal proteins, e.g. L4, L17, and L20. It is important during the early stages of 50S assembly. It makes multiple contacts with different domains of the 23S rRNA in the assembled 50S subunit and ribosome. Its function is as follows. The globular domain of the protein is located near the polypeptide exit tunnel on the outside of the subunit, while an extended beta-hairpin is found that lines the wall of the exit tunnel in the center of the 70S ribosome. This Bacillus cereus (strain ATCC 10987 / NRS 248) protein is Large ribosomal subunit protein uL22.